Consider the following 344-residue polypeptide: Microcin C7 self-immunity protein MccF (344 aa).

The protein belongs to the peptidase S66 family.

Involved in specific self-immunity to microcin C7. The protein is Microcin C7 self-immunity protein MccF (mccF) of Escherichia coli.